Here is a 251-residue protein sequence, read N- to C-terminus: MVRNMKMKKSNEWLWLGTKIINAHKTNGFESAIIFGKQGTGKTTYALKVAKEVYQRLGHEPDKAWELALDSLFFELKDALRIMKIFRQNDRTIPIIIFDDAGIWLQKYLWYKEEMIKFYRIYNIIRNIVSGVIFTTPSPNDIAFYVREKGWKLIMITRNGRQPDGTPKAVAKIAVNKITIIKGKITNKMKWRTVDDYTVKLPDWVYKEYVERRKVYEEKLLEELDEVLDSDNKTENPSNPSLLTKIDDVTR.

36–43 (GKQGTGKT) is a binding site for ATP. A disordered region spans residues 230-251 (SDNKTENPSNPSLLTKIDDVTR).

This protein may be involved in virus assembly. Essential for virus function. This is an uncharacterized protein from Sulfolobus spindle-shape virus 1 (SSV1).